The following is a 71-amino-acid chain: U-scoloptoxin(21)-Sm1a (71 aa).

Residues 1–21 (MKSVIFALFLVYLLIVRAAEA) form the signal peptide. The tract at residues 45 to 71 (IELANDPNGPGRRRRAPAENEDFLKHS) is disordered. The span at 60-71 (APAENEDFLKHS) shows a compositional bias: basic and acidic residues.

It belongs to the scoloptoxin-21 family. Expressed by the venom gland.

It is found in the secreted. This chain is U-scoloptoxin(21)-Sm1a, found in Scolopendra morsitans (Tanzanian blue ringleg centipede).